The chain runs to 567 residues: Amino-acid acetyltransferase, mitochondrial (567 aa).

The 167-residue stretch at 392-558 (KDSPQTNPLH…ARLKEYAKHI (167 aa)) folds into the N-acetyltransferase domain.

This sequence belongs to the acetyltransferase family.

The protein resides in the mitochondrion. It carries out the reaction L-glutamate + acetyl-CoA = N-acetyl-L-glutamate + CoA + H(+). Its pathway is amino-acid biosynthesis; L-arginine biosynthesis; N(2)-acetyl-L-ornithine from L-glutamate: step 1/4. Functionally, N-acetylglutamate synthase involved in arginine biosynthesis. The chain is Amino-acid acetyltransferase, mitochondrial (ARG2) from Vanderwaltozyma polyspora (strain ATCC 22028 / DSM 70294 / BCRC 21397 / CBS 2163 / NBRC 10782 / NRRL Y-8283 / UCD 57-17) (Kluyveromyces polysporus).